Reading from the N-terminus, the 271-residue chain is Delta(7)-sterol-C5(6)-desaturase (271 aa).

Helical transmembrane passes span 44-64 (IGGV…IYHL) and 120-140 (VGWL…EFGI). One can recognise a Fatty acid hydroxylase domain in the interval 130-259 (AIYLVIVEFG…TIWMDWMFGT (130 aa)). Residues 144–148 (HMELH) carry the Histidine box-1 motif. A Histidine box-2 motif is present at residues 158–162 (HATHH). Residues 190 to 210 (HVVALLLVPMHFSTHIALIFL) traverse the membrane as a helical segment. Residues 235 to 239 (HTIHH) carry the Histidine box-3 motif.

Belongs to the sterol desaturase family. It depends on Fe cation as a cofactor.

The protein resides in the endoplasmic reticulum membrane. It catalyses the reaction a Delta(7)-sterol + 2 Fe(II)-[cytochrome b5] + O2 + 2 H(+) = a Delta(5),Delta(7)-sterol + 2 Fe(III)-[cytochrome b5] + 2 H2O. Involved in the biosynthesis of sitosterol and campesterol. In Nicotiana tabacum (Common tobacco), this protein is Delta(7)-sterol-C5(6)-desaturase.